A 523-amino-acid chain; its full sequence is Bifunctional purine biosynthesis protein PurH (523 aa).

The region spanning M1 to T149 is the MGS-like domain.

The protein belongs to the PurH family.

The enzyme catalyses (6R)-10-formyltetrahydrofolate + 5-amino-1-(5-phospho-beta-D-ribosyl)imidazole-4-carboxamide = 5-formamido-1-(5-phospho-D-ribosyl)imidazole-4-carboxamide + (6S)-5,6,7,8-tetrahydrofolate. It catalyses the reaction IMP + H2O = 5-formamido-1-(5-phospho-D-ribosyl)imidazole-4-carboxamide. The protein operates within purine metabolism; IMP biosynthesis via de novo pathway; 5-formamido-1-(5-phospho-D-ribosyl)imidazole-4-carboxamide from 5-amino-1-(5-phospho-D-ribosyl)imidazole-4-carboxamide (10-formyl THF route): step 1/1. It functions in the pathway purine metabolism; IMP biosynthesis via de novo pathway; IMP from 5-formamido-1-(5-phospho-D-ribosyl)imidazole-4-carboxamide: step 1/1. The protein is Bifunctional purine biosynthesis protein PurH of Chlorobaculum parvum (strain DSM 263 / NCIMB 8327) (Chlorobium vibrioforme subsp. thiosulfatophilum).